A 1006-amino-acid polypeptide reads, in one-letter code: Collagen alpha-2(I) chain (1006 aa).

Residues 1-84 are disordered; it reads SGGFDFSFLP…GFPGTPGLPG (84 aa). Residues Pro-10, Pro-13, Pro-35, and Pro-41 each carry the 4-hydroxyproline modification. A compositionally biased stretch (low complexity) spans 28 to 64; the sequence is LMGPRGPPGASGAPGPQGFQGPAGEPGEPGQTGPAGA. The residue at position 86 (Lys-86) is a 5-hydroxylysine; alternate. A glycan (O-linked (Gal...) hydroxylysine; alternate) is linked at Lys-86. A disordered region spans residues 99-1006; sequence GQPGAAGVKG…FGYEGDFYRA (908 aa). Composition is skewed to low complexity over residues 142–163 and 209–230; these read SRGS…SAGP and PGAN…AGAP. The segment covering 264–273 has biased composition (gly residues); it reads GESGGKGEPG. The segment covering 274–284 has biased composition (low complexity); it reads SAGPQGPPGSS. The segment covering 306–315 has biased composition (gly residues); the sequence is GLRGGPGSRG. Over residues 328-344 the composition is skewed to low complexity; sequence PAGARGASGPAGVRGPS. 4-hydroxyproline occurs at positions 350 and 353. A compositionally biased stretch (low complexity) spans 379–398; the sequence is LPGIDGRPGPIGPAGARGEA. The segment covering 447–456 has biased composition (gly residues); sequence GVQGGKGEQG. 2 stretches are compositionally biased toward low complexity: residues 503–520 and 532–542; these read PGES…SRGP and EPGVVGAPGTA. Over residues 543–552 the composition is skewed to gly residues; sequence GPAGSGGLPG. Composition is skewed to low complexity over residues 585 to 615 and 622 to 642; these read AVGA…PRGS and VGPA…QPGA. The segment covering 643–652 has biased composition (basic and acidic residues); that stretch reads KGERGTKGPK. Residues 660–670 show a composition bias toward low complexity; sequence PTGPVGSAGPA. Gly residues predominate over residues 680-689; sequence GSRGDGGPPG. Low complexity predominate over residues 691–700; that stretch reads TGFPGAAGRT. The span at 737–746 shows a compositional bias: gly residues; the sequence is GETGAGGPPG. Composition is skewed to low complexity over residues 754–781 and 789–799; these read SGEP…LGLP and LPGVAGAVGEP. The segment covering 800-810 has biased composition (gly residues); sequence GPLGIGPPGAR. The span at 837–882 shows a compositional bias: low complexity; the sequence is YAGNPGPVGAAGAPGPHGAVGPAGKHGNRGEPGPVGSAGPVGALGP. Residues 892–903 are compositionally biased toward basic and acidic residues; sequence RGDKGEAGDKGP. The span at 976–988 shows a compositional bias: pro residues; it reads SGPPGPPGPPGPP.

This sequence belongs to the fibrillar collagen family. Trimers of one alpha 2(I) and two alpha 1(I) chains. Interacts (via C-terminus) with TMEM131 (via PapD-L domain); the interaction is direct and is involved in assembly and TRAPPIII ER-to-Golgi transport complex-dependent secretion of collagen. In terms of processing, prolines at the third position of the tripeptide repeating unit (G-X-Y) are hydroxylated in some or all of the chains. Expressed in bones.

The protein localises to the secreted. It is found in the extracellular space. The protein resides in the extracellular matrix. Type I collagen is a member of group I collagen (fibrillar forming collagen). This is Collagen alpha-2(I) chain from Choloepus hoffmanni (Hoffmann's two-fingered sloth).